We begin with the raw amino-acid sequence, 344 residues long: L-rhamnose-proton symporter (344 aa).

Helical transmembrane passes span 4–24 (AITM…CFYA), 38–58 (WSVG…ALLL), 68–88 (FSLS…IGNI), 101–121 (MGIG…TPII), 137–157 (TLLG…AGQL), 175–195 (LVLA…MNAA), 214–234 (LPSY…FCFI), 259–279 (VLLS…YAWG), 290–310 (ISWM…GLVL), and 323–343 (VLSL…IGMA).

The protein belongs to the L-rhamnose transporter (TC 2.A.7.6) family.

It is found in the cell inner membrane. It catalyses the reaction L-rhamnopyranose(in) + H(+)(in) = L-rhamnopyranose(out) + H(+)(out). Functionally, uptake of L-rhamnose across the cytoplasmic membrane with the concomitant transport of protons into the cell (symport system). This is L-rhamnose-proton symporter from Shigella dysenteriae serotype 1 (strain Sd197).